The primary structure comprises 114 residues: Large ribosomal subunit protein uL22 (114 aa).

The protein belongs to the universal ribosomal protein uL22 family. In terms of assembly, part of the 50S ribosomal subunit.

Functionally, this protein binds specifically to 23S rRNA; its binding is stimulated by other ribosomal proteins, e.g. L4, L17, and L20. It is important during the early stages of 50S assembly. It makes multiple contacts with different domains of the 23S rRNA in the assembled 50S subunit and ribosome. Its function is as follows. The globular domain of the protein is located near the polypeptide exit tunnel on the outside of the subunit, while an extended beta-hairpin is found that lines the wall of the exit tunnel in the center of the 70S ribosome. In Methylacidiphilum infernorum (isolate V4) (Methylokorus infernorum (strain V4)), this protein is Large ribosomal subunit protein uL22.